The following is a 22-amino-acid chain: Dioicin-1 (22 aa).

It localises to the secreted. The protein resides in the extracellular space. Its subcellular location is the golgi apparatus. It is found in the vacuole. It carries out the reaction Endohydrolysis of the N-glycosidic bond at one specific adenosine on the 28S rRNA.. Its function is as follows. Nicks pBR322 dsDNA. Has adenine polynucleotide glycosidase activity on herring sperm ssDNA. The chain is Dioicin-1 from Phytolacca dioica (Bella sombra tree).